We begin with the raw amino-acid sequence, 811 residues long: Protein MEI2-like 5 (811 aa).

2 RRM domains span residues 193 to 266 (RTLF…YSIP) and 278 to 351 (GTLV…PSRP). Positions 371 to 397 (TKHNSFQIGSPSANSPPSLWSQLGSPT) are disordered. The span at 374–397 (NSFQIGSPSANSPPSLWSQLGSPT) shows a compositional bias: polar residues.

In terms of biological role, probable RNA-binding protein that may play a role in growth regulation. In Oryza sativa subsp. japonica (Rice), this protein is Protein MEI2-like 5 (ML5).